A 389-amino-acid chain; its full sequence is Na(+)/H(+) antiporter NhaA 1 (389 aa).

11 helical membrane passes run 14-34 (AGGILLVIAAAIAMVIANSPL), 47-67 (FGMSVSHWINDGLMAIFFLLI), 87-107 (IFPAIAAVGGMLAPALIYVAF), 117-137 (GWAIPAATDIAFALGIMALLG), 146-166 (VFLLALAIIDDLGVVVIIALF), 171-191 (LSTLALTVGFAMTGVLFMLNA), 197-217 (LIWYIVVGFILWVAVLKSGVH), 252-272 (VAFAILPVFAFANAGISLEGV), 280-300 (MLPLGIALGLLVGKPLGIFTF), 321-341 (IFAVSVLCGIGFTMSIFISSL), and 356-376 (LGILMGSTTAAVLGYFLLHVS).

This sequence belongs to the NhaA Na(+)/H(+) (TC 2.A.33) antiporter family.

It is found in the cell inner membrane. It carries out the reaction Na(+)(in) + 2 H(+)(out) = Na(+)(out) + 2 H(+)(in). In terms of biological role, na(+)/H(+) antiporter that extrudes sodium in exchange for external protons. In Vibrio vulnificus (strain CMCP6), this protein is Na(+)/H(+) antiporter NhaA 1.